We begin with the raw amino-acid sequence, 385 residues long: 4-hydroxy-3-methylbut-2-en-1-yl diphosphate synthase (flavodoxin) 1 (385 aa).

Residues Cys-280, Cys-283, Cys-315, and Glu-322 each coordinate [4Fe-4S] cluster.

It belongs to the IspG family. Requires [4Fe-4S] cluster as cofactor.

The enzyme catalyses (2E)-4-hydroxy-3-methylbut-2-enyl diphosphate + oxidized [flavodoxin] + H2O + 2 H(+) = 2-C-methyl-D-erythritol 2,4-cyclic diphosphate + reduced [flavodoxin]. It participates in isoprenoid biosynthesis; isopentenyl diphosphate biosynthesis via DXP pathway; isopentenyl diphosphate from 1-deoxy-D-xylulose 5-phosphate: step 5/6. Converts 2C-methyl-D-erythritol 2,4-cyclodiphosphate (ME-2,4cPP) into 1-hydroxy-2-methyl-2-(E)-butenyl 4-diphosphate. This Streptomyces avermitilis (strain ATCC 31267 / DSM 46492 / JCM 5070 / NBRC 14893 / NCIMB 12804 / NRRL 8165 / MA-4680) protein is 4-hydroxy-3-methylbut-2-en-1-yl diphosphate synthase (flavodoxin) 1.